The primary structure comprises 314 residues: Acetaldehyde dehydrogenase (314 aa).

15-18 contacts NAD(+); that stretch reads SGNI. Cysteine 133 acts as the Acyl-thioester intermediate in catalysis. NAD(+) is bound by residues 164-172 and asparagine 292; that span reads SAGPGTRAN.

This sequence belongs to the acetaldehyde dehydrogenase family.

The enzyme catalyses acetaldehyde + NAD(+) + CoA = acetyl-CoA + NADH + H(+). The chain is Acetaldehyde dehydrogenase from Paraburkholderia phytofirmans (strain DSM 17436 / LMG 22146 / PsJN) (Burkholderia phytofirmans).